The primary structure comprises 3065 residues: MAX gene-associated protein (3065 aa).

Residues K4 and K178 each participate in a glycyl lysine isopeptide (Lys-Gly) (interchain with G-Cter in SUMO2) cross-link. The T-box DNA-binding region spans 84 to 260 (MWNEFYHRST…YNPFAKGFRD (177 aa)). The span at 259–277 (RDDGLNNKPQRDGKQKNSS) shows a compositional bias: basic and acidic residues. The segment at 259-322 (RDDGLNNKPQ…GHETSGKGLE (64 aa)) is disordered. Polar residues predominate over residues 278–289 (DQEGNNISSSSG). The span at 309-322 (PLSRGHETSGKGLE) shows a compositional bias: basic and acidic residues. Glycyl lysine isopeptide (Lys-Gly) (interchain with G-Cter in SUMO2) cross-links involve residues K323, K329, K349, K432, K460, K465, and K482. S534 is modified (phosphoserine). K570 participates in a covalent cross-link: Glycyl lysine isopeptide (Lys-Gly) (interchain with G-Cter in SUMO2). Residues 604-653 (QNASPNVPGKRGRPRKLKLCKAGRPPKNTGKSLISTKNTPVSPGSTFPDV) are disordered. The residue at position 607 (S607) is a Phosphoserine. K613 is covalently cross-linked (Glycyl lysine isopeptide (Lys-Gly) (interchain with G-Cter in SUMO2)). Residues 613–624 (KRGRPRKLKLCK) show a composition bias toward basic residues. Polar residues predominate over residues 632–648 (TGKSLISTKNTPVSPGS). The residue at position 645 (S645) is a Phosphoserine. Glycyl lysine isopeptide (Lys-Gly) (interchain with G-Cter in SUMO2) cross-links involve residues K654, K785, K791, K817, and K826. Residue S851 is modified to Phosphoserine. Residues 881 to 911 (STSYSLKPHSVPPVSRKAKSQNRQATFSGRT) form a disordered region. The span at 901-911 (QNRQATFSGRT) shows a compositional bias: polar residues. The residue at position 924 (S924) is a Phosphoserine. K928 participates in a covalent cross-link: Glycyl lysine isopeptide (Lys-Gly) (interchain with G-Cter in SUMO2). A disordered region spans residues 971 to 990 (RQAQQQQQQQQGSRPPGLSK). Positions 972-981 (QAQQQQQQQQ) are enriched in low complexity. Glycyl lysine isopeptide (Lys-Gly) (interchain with G-Cter in SUMO2) cross-links involve residues K990, K1091, K1140, K1162, K1199, and K1207. Residues 1111–1147 (YDTLGEEAREEEEGIREEEEQLKEKKKRKKLEYTICE) are a coiled coil. S1208 carries the phosphoserine modification. 2 disordered regions span residues 1246-1332 (RKKE…PGGP) and 1380-1429 (RKSR…MEDI). 2 stretches are compositionally biased toward low complexity: residues 1253–1269 (QPSSSSSPSPSFQQQTS) and 1310–1322 (KSSCNEGESSSTS). Residues S1430 and S1457 each carry the phosphoserine modification. Glycyl lysine isopeptide (Lys-Gly) (interchain with G-Cter in SUMO2) cross-links involve residues K1461 and K1502. Disordered regions lie at residues 1488–1517 (SRKPRTLLPSTSNSKMASSSGTATNRPGKN), 1905–1927 (SPPEPQSFASKTGSETKITYSSG), and 1967–2029 (QMKR…EDRG). 2 stretches are compositionally biased toward polar residues: residues 1495 to 1514 (LPSTSNSKMASSSGTATNRP) and 1911 to 1927 (SFASKTGSETKITYSSG). The segment covering 1968 to 1994 (MKRESQNPDQKDETNSIKREQETKKVL) has biased composition (basic and acidic residues). Glycyl lysine isopeptide (Lys-Gly) (interchain with G-Cter in SUMO2) cross-links involve residues K1985 and K1992. Over residues 2008–2023 (IKQNSGAATSEETLND) the composition is skewed to polar residues. Residues K2103, K2113, K2135, K2139, K2146, K2159, K2194, K2206, and K2238 each participate in a glycyl lysine isopeptide (Lys-Gly) (interchain with G-Cter in SUMO2) cross-link. A disordered region spans residues 2258-2316 (RRAAKSSRGNGHFQGHLLLPGEQIQPKQEKKGGRSSADFTVLDLEEDDEDDNEKTDDSI). Residue R2265 is modified to Omega-N-methylarginine. A Glycyl lysine isopeptide (Lys-Gly) (interchain with G-Cter in SUMO2) cross-link involves residue K2284. The span at 2300–2316 (DLEEDDEDDNEKTDDSI) shows a compositional bias: acidic residues. Glycyl lysine isopeptide (Lys-Gly) (interchain with G-Cter in SUMO2) cross-links involve residues K2378, K2413, K2457, and K2532. The 52-residue stretch at 2423 to 2474 (YYRRTHTANERRRRGEMRDLFEKLKITLGLLHSSKVSKSLILTRAFSEIQGL) folds into the bHLH domain. Residue S2541 is modified to Phosphoserine. Residue K2546 forms a Glycyl lysine isopeptide (Lys-Gly) (interchain with G-Cter in SUMO2) linkage. Residues 2576-2595 (KKDQATENTSPLNTPHTSAN) form a disordered region. The span at 2581–2595 (TENTSPLNTPHTSAN) shows a compositional bias: polar residues. Residues K2629, K2679, K2698, and K2784 each participate in a glycyl lysine isopeptide (Lys-Gly) (interchain with G-Cter in SUMO2) cross-link. Positions 2668–2709 (GSKYPHEVPDSKPSDHLKDTVRNEDNSLEDKGRISSRGNRDG) are disordered. The segment covering 2671-2709 (YPHEVPDSKPSDHLKDTVRNEDNSLEDKGRISSRGNRDG) has biased composition (basic and acidic residues). A coiled-coil region spans residues 2817-2841 (DDTDETLTSLLNEIAFLNQQLNDDS). Phosphoserine is present on residues S2910 and S2921. Positions 2944-2968 (AIDGGKNTSGLPAEPESVSSPPTLH) are disordered. Phosphoserine is present on S2978. A Glycyl lysine isopeptide (Lys-Gly) (interchain with G-Cter in SUMO2) cross-link involves residue K3041.

In terms of assembly, interacts with MAX. Requires dimerization with MAX for E-box binding. Component of some MLL1/MLL complex, at least composed of the core components KMT2A/MLL1, ASH2L, HCFC1/HCF1, WDR5 and RBBP5, as well as the facultative components BACC1, CHD8, E2F6, HSP70, INO80C, KANSL1, LAS1L, MAX, MCRS1, MGA, MYST1/MOF, PELP1, PHF20, PRP31, RING2, RUVB1/TIP49A, RUVB2/TIP49B, SENP3, TAF1, TAF4, TAF6, TAF7, TAF9 and TEX10. Interacts with ZMYND11. As to expression, highly expressed in germ cells and granulosa cells.

It localises to the nucleus. Its function is as follows. Functions as a dual-specificity transcription factor, regulating the expression of both MAX-network and T-box family target genes. Functions as a repressor or an activator. Binds to 5'-AATTTCACACCTAGGTGTGAAATT-3' core sequence and seems to regulate MYC-MAX target genes. Suppresses transcriptional activation by MYC and inhibits MYC-dependent cell transformation. Function activated by heterodimerization with MAX. This heterodimerization serves the dual function of both generating an E-box-binding heterodimer and simultaneously blocking interaction of a corepressor. This Homo sapiens (Human) protein is MAX gene-associated protein.